The following is a 282-amino-acid chain: MKLAVITDSTATLPIDLKQDKAIFSLDIPVIIDDETYFEGRNLSIDDFYQKMADSKNLPKTSQPSLSELDNLLGLLSSKGYTHVIGLFLAGGISGFWQNIQFLAEEHPEIEMAFPDSKITSAPLGSMVKNVLDWSRQGMTFQAILNKLQEQIDGTTAFIMVDDLNHLVKGGRLSNGSALLGNLLSIKPILRFDEEGKIVVYEKVRTEKKAMKRLVEILNDLIADGQYNVSIIHSKAQDKADYLKRLLQDSGYQYDIEEVHFGAVIATHLGEGAIAFGVTPRL.

Residues 3-280 enclose the DegV domain; that stretch reads LAVITDSTAT…EGAIAFGVTP (278 aa). Positions 61 and 94 each coordinate hexadecanoate.

May bind long-chain fatty acids, such as palmitate, and may play a role in lipid transport or fatty acid metabolism. The chain is DegV domain-containing protein SpyM3_0586 from Streptococcus pyogenes serotype M3 (strain ATCC BAA-595 / MGAS315).